A 179-amino-acid polypeptide reads, in one-letter code: Large ribosomal subunit protein uL6 (179 aa).

Belongs to the universal ribosomal protein uL6 family. As to quaternary structure, part of the 50S ribosomal subunit.

Its function is as follows. This protein binds to the 23S rRNA, and is important in its secondary structure. It is located near the subunit interface in the base of the L7/L12 stalk, and near the tRNA binding site of the peptidyltransferase center. This is Large ribosomal subunit protein uL6 from Buchnera aphidicola subsp. Baizongia pistaciae (strain Bp).